A 175-amino-acid polypeptide reads, in one-letter code: Large ribosomal subunit protein uL18 (175 aa).

The protein belongs to the universal ribosomal protein uL18 family. Part of the 50S ribosomal subunit. Contacts the 5S and 23S rRNAs.

Its function is as follows. This is one of the proteins that bind and probably mediate the attachment of the 5S RNA into the large ribosomal subunit, where it forms part of the central protuberance. The protein is Large ribosomal subunit protein uL18 of Methanospirillum hungatei JF-1 (strain ATCC 27890 / DSM 864 / NBRC 100397 / JF-1).